We begin with the raw amino-acid sequence, 310 residues long: MFKHVTVLLKETVDGLDIKPDGTYVDCTLGGGGHSSYLLSQLTEGGKLIAFDQDEIAIQNAKEKFSSYGEQFITVKSNFRYLAEKLQEIGITEVDGILFDLGVSSPQLDTPERGFSYHHDAPLDMRMDQDAPLTAYDVVNSWSYEQLVRIFFQYGEEKFSKQIARKIEAYRENKAIETTGELVELIKEGIPAPARRTGGHPAKRVFQAIRIAVNDELKVFEEALESAIEMVKPGGRVSVITFHSLEDRICKTTFKRNSTTPQLPPGLPIIPDEFKPKLKLITRKPILPSDIELEENNRARSAKLRIAEKR.

S-adenosyl-L-methionine is bound by residues 32–34 (GGH), Asp52, Phe79, Asp100, and Gln107.

This sequence belongs to the methyltransferase superfamily. RsmH family.

It is found in the cytoplasm. It carries out the reaction cytidine(1402) in 16S rRNA + S-adenosyl-L-methionine = N(4)-methylcytidine(1402) in 16S rRNA + S-adenosyl-L-homocysteine + H(+). Specifically methylates the N4 position of cytidine in position 1402 (C1402) of 16S rRNA. This chain is Ribosomal RNA small subunit methyltransferase H, found in Bacillus cereus (strain G9842).